A 160-amino-acid chain; its full sequence is MFRIGQGFDVHQFVEGRPLIIGGVHIPYEKGLLGHSDADVLLHAVADACLGAIGAGDIGRHFPDTDPRYKDADSAELLAHVWSLVRQEGYVLVNADCTIIAQKPKMAPYIEEMKKVIARLLEAERSQVNVKATTTEKLGFTGREEGVAAQVVVLLQKSEA.

A divalent metal cation is bound by residues D9 and H11. 4-CDP-2-C-methyl-D-erythritol 2-phosphate is bound by residues 9 to 11 (DVH) and 35 to 36 (HS). H43 is a binding site for a divalent metal cation. 4-CDP-2-C-methyl-D-erythritol 2-phosphate contacts are provided by residues 57–59 (DIG), 62–66 (FPDTD), 101–107 (AQKPKMA), 133–136 (TTTE), F140, and R143.

It belongs to the IspF family. Homotrimer. Requires a divalent metal cation as cofactor.

It carries out the reaction 4-CDP-2-C-methyl-D-erythritol 2-phosphate = 2-C-methyl-D-erythritol 2,4-cyclic diphosphate + CMP. Its pathway is isoprenoid biosynthesis; isopentenyl diphosphate biosynthesis via DXP pathway; isopentenyl diphosphate from 1-deoxy-D-xylulose 5-phosphate: step 4/6. In terms of biological role, involved in the biosynthesis of isopentenyl diphosphate (IPP) and dimethylallyl diphosphate (DMAPP), two major building blocks of isoprenoid compounds. Catalyzes the conversion of 4-diphosphocytidyl-2-C-methyl-D-erythritol 2-phosphate (CDP-ME2P) to 2-C-methyl-D-erythritol 2,4-cyclodiphosphate (ME-CPP) with a corresponding release of cytidine 5-monophosphate (CMP). The protein is 2-C-methyl-D-erythritol 2,4-cyclodiphosphate synthase of Geobacillus thermodenitrificans (strain NG80-2).